We begin with the raw amino-acid sequence, 199 residues long: Recombination protein RecR (199 aa).

The C4-type zinc-finger motif lies at Cys-57–Cys-72. The 96-residue stretch at Ser-81–Pro-176 folds into the Toprim domain.

It belongs to the RecR family.

Its function is as follows. May play a role in DNA repair. It seems to be involved in an RecBC-independent recombinational process of DNA repair. It may act with RecF and RecO. This is Recombination protein RecR from Shewanella piezotolerans (strain WP3 / JCM 13877).